We begin with the raw amino-acid sequence, 145 residues long: MPSQKSPTKRSPTKRSPTKRSPQKGGKGGKGAKRGGKAGKRRRGVQVKRRRRRRESYGIYIYKVLKQVHPDTGISSRAMSVMNSFVNDVFERIAAEAGRLTTYNRRSTVSSREVQTAVRLLLPGELAKHAVSEGTKAVTKYTTSR.

Residues 1–52 are disordered; it reads MPSQKSPTKRSPTKRSPTKRSPQKGGKGGKGAKRGGKAGKRRRGVQVKRRRR. 4 short sequence motifs (SPKK motif) span residues 6-9, 11-14, 16-19, and 21-24; these read SPTK and SPQK. 2 stretches are compositionally biased toward basic residues: residues 7 to 22 and 30 to 52; these read PTKR…KRSP and KGAK…RRRR. Residues Ser16 and Ser21 each carry the phosphoserine modification. Ser132 carries O-linked (GlcNAc) serine glycosylation. A Glycyl lysine isopeptide (Lys-Gly) (interchain with G-Cter in ubiquitin) cross-link involves residue Lys140.

This sequence belongs to the histone H2B family. As to quaternary structure, the nucleosome is a histone octamer containing two molecules each of H2A, H2B, H3 and H4 assembled in one H3-H4 heterotetramer and two H2A-H2B heterodimers. The octamer wraps approximately 147 bp of DNA. Monoubiquitination of Lys-140 gives a specific tag for epigenetic transcriptional activation and is also prerequisite for histone H3 'Lys-4' and 'Lys-79' methylation. In terms of processing, phosphorylated on SPKK motifs 3 and 4; which may regulate DNA binding. Dephosphorylated during maturation of spermatids to mature sperm and rephosphorylated at fertilization. Post-translationally, glcNAcylation at Ser-132 promotes monoubiquitination of Lys-140. It fluctuates in response to extracellular glucose, and associates with transcribed genes.

The protein resides in the nucleus. It is found in the chromosome. Core component of nucleosome. Nucleosomes wrap and compact DNA into chromatin, limiting DNA accessibility to the cellular machineries which require DNA as a template. Histones thereby play a central role in transcription regulation, DNA repair, DNA replication and chromosomal stability. DNA accessibility is regulated via a complex set of post-translational modifications of histones, also called histone code, and nucleosome remodeling. This Parechinus angulosus (Angulate sea urchin) protein is Histone H2B.1, sperm.